The following is a 166-amino-acid chain: Large ribosomal subunit protein uL10 (166 aa).

Belongs to the universal ribosomal protein uL10 family. As to quaternary structure, part of the ribosomal stalk of the 50S ribosomal subunit. The N-terminus interacts with L11 and the large rRNA to form the base of the stalk. The C-terminus forms an elongated spine to which L12 dimers bind in a sequential fashion forming a multimeric L10(L12)X complex.

In terms of biological role, forms part of the ribosomal stalk, playing a central role in the interaction of the ribosome with GTP-bound translation factors. The polypeptide is Large ribosomal subunit protein uL10 (Ectopseudomonas mendocina (strain ymp) (Pseudomonas mendocina)).